The chain runs to 542 residues: Tripartite motif-containing protein 26 (542 aa).

The RING-type zinc finger occupies 16-57 (CSICLDYLRDPVTIDCGHVFCRSCTSDIRPISGNRPVCPLCK). The segment at 97–138 (QDMKLCERHQEKLHYYCEDDGKLLCVMCRESREHRPHTAVLV) adopts a B box-type zinc-finger fold. The Zn(2+) site is built by Cys-102, His-105, Cys-124, and His-130. Residues 197–243 (QFLKKREQHLLDQLATLEQLLTEGREKFKTRGVSELDRLTLVISELE) are a coiled coil. A B30.2/SPRY domain is found at 298-542 (RGLRQFQGKL…WPEARLLLRP (245 aa)). Positions 379–440 (REGWSEDEEE…EEEEEVQESC (62 aa)) are disordered. Composition is skewed to acidic residues over residues 383 to 405 (SEDEEEGEEEEEGEEEEEDEEPG) and 413 to 437 (WETDEEDESLGEEEEEEEEEEEEVQ). Residues 411-440 (EDWETDEEDESLGEEEEEEEEEEEEVQESC) adopt a coiled-coil conformation.

Belongs to the TRIM/RBCC family. Interacts with TBK1; this interaction bridges together TBK1 and NEMO in order to activate TBK1. Interacts with INCA1. Post-translationally, autoubiquitinates upon viral infection. In turn, autoubiquitinated TRIM26 recruits NEMO and bridges TBK1-NEMO interaction.

The protein localises to the cytoplasm. The protein resides in the nucleus. It catalyses the reaction S-ubiquitinyl-[E2 ubiquitin-conjugating enzyme]-L-cysteine + [acceptor protein]-L-lysine = [E2 ubiquitin-conjugating enzyme]-L-cysteine + N(6)-ubiquitinyl-[acceptor protein]-L-lysine.. E3 ubiquitin-protein ligase which regulates the IFN-beta production and antiviral response downstream of various DNA-encoded pattern-recognition receptors (PRRs). Also plays a central role in determining the response to different forms of oxidative stress by controlling levels of DNA glycosylases NEIL1, NEIL3 and NTH1 that are involved in repair of damaged DNA. Promotes nuclear IRF3 ubiquitination and proteasomal degradation. Bridges together TBK1 and NEMO during the innate response to viral infection leading to the activation of TBK1. Positively regulates LPS-mediated inflammatory innate immune response by catalyzing the 'Lys-11'-linked polyubiquitination of TAB1 to enhance its activation and subsequent NF-kappa-B and MAPK signaling. In a manner independent of its catalytic activity, inhibits WWP2, a SOX2-directed E3 ubiquitin ligase, and thus protects SOX2 from polyubiquitination and proteasomal degradation. Ubiquitinates the histone acetyltransferase protein complex component PHF20 and thereby triggers its degradation in the nucleus after its recruitment by the histone demethylase KDM6B, serving as a scaffold protein. Upon induction by TGF-beta, ubiquitinates the TFIID component TAF7 for proteasomal degradation. Induces ferroptosis by ubiquitinating SLC7A11, a critical protein for lipid reactive oxygen species (ROS) scavenging. This is Tripartite motif-containing protein 26 (Trim26) from Rattus norvegicus (Rat).